A 162-amino-acid polypeptide reads, in one-letter code: Phosphopantetheine adenylyltransferase (162 aa).

Thr9 provides a ligand contact to substrate. ATP contacts are provided by residues 9-10 and His17; that span reads TF. Residues Lys41, Leu73, and Arg87 each contribute to the substrate site. Residues 88-90, Glu98, and 123-129 contribute to the ATP site; these read GLR and LSYISSS.

This sequence belongs to the bacterial CoaD family. Homohexamer. It depends on Mg(2+) as a cofactor.

It localises to the cytoplasm. It catalyses the reaction (R)-4'-phosphopantetheine + ATP + H(+) = 3'-dephospho-CoA + diphosphate. Its pathway is cofactor biosynthesis; coenzyme A biosynthesis; CoA from (R)-pantothenate: step 4/5. Its function is as follows. Reversibly transfers an adenylyl group from ATP to 4'-phosphopantetheine, yielding dephospho-CoA (dPCoA) and pyrophosphate. The sequence is that of Phosphopantetheine adenylyltransferase from Teredinibacter turnerae (strain ATCC 39867 / T7901).